A 418-amino-acid polypeptide reads, in one-letter code: Glutamyl-tRNA reductase (418 aa).

Residues 49-52, Ser109, 114-116, and Gln120 contribute to the substrate site; these read TCNR and EPQ. Residue Cys50 is the Nucleophile of the active site. Position 189–194 (189–194) interacts with NADP(+); the sequence is GAGETI.

Belongs to the glutamyl-tRNA reductase family. As to quaternary structure, homodimer.

The enzyme catalyses (S)-4-amino-5-oxopentanoate + tRNA(Glu) + NADP(+) = L-glutamyl-tRNA(Glu) + NADPH + H(+). Its pathway is porphyrin-containing compound metabolism; protoporphyrin-IX biosynthesis; 5-aminolevulinate from L-glutamyl-tRNA(Glu): step 1/2. Catalyzes the NADPH-dependent reduction of glutamyl-tRNA(Glu) to glutamate 1-semialdehyde (GSA). The polypeptide is Glutamyl-tRNA reductase (Klebsiella pneumoniae subsp. pneumoniae (strain ATCC 700721 / MGH 78578)).